The sequence spans 2530 residues: MLLQFLLLSLCVSVATAKVITGVFNSFDSLTWTRAGNYAYKGPNRPTWNAVLGWSLDGTSANPGDTFTLNMPCVFKFITDQTSVDLTADGVKYATCQFYSGEEFTTFSSLKCTVSNTLTSSIKALGTVTLPISFNVGGTGSLVDLESSKCFKAGTNTVTFNDGDKKISIDVDFEKTNEDASGYFIASRLIPSINKASITYVAPQCANGYTSGAMGFTIGSGDTTIDCSNVHVGITKGLNDWNFPVSSDSLSYNKTCSSTGISITYENVPAGYRPFFDVYTSVSDQNRQLKYTNDYACVGSSLQSKPFNLRLRGYNNSEANSNGFVIVATTRTVTDSTTAVTTLPFNPSVDKTKTIEILQPIPTTTITTSYVGVTTSYSTKTAPIGETATVIVDVPYHTTTTVTSEWTGTITTTTTRTNPTDSIDTVVVQVPSPNPTVTTTEYWSQSYATTTTVTAPPGGTDSVIIREPPNPTVTTTEYWSQSYATSSTVTAPPGGTDTVIIREPPNPTVTTTEYWSQSYATTTTVTAPPGGTDSVIIREPPNPTVTTTEYWSQSFATTTTITAPPGETDTVLIREPPNHTVTTTEYWSQSYVTTSTITAPPGGTDTVIIREPPNYTVTTTEYWSQSYATTTTVTAPPGGTDTVIIREPPNPTVTTTEYWSQSYATTTTVTGPPGGTDTVIIREPPNPTVTTTEYWSQSYATTTTVTAPPGGTDTVIIREPPNPTVTTTEYWSQSYATTTTVTGPPGGTDTVIIREPPNPTVTTTEYWSQSYATTTTVTAPPGGTATVIIREPPNPTVTTTEYWSQSYATTTTVTGPPGGTDTVIIREPPNPTVTTTEYWSQSYATTTTVTAPPGGTATVIIREPPNYTVTTTEYWSQSYATTTTVTGPPGGTDTVIIREPPSPTVTTTEYWSQSYATTTTVTAPPGGTATVIIREPPNPTVTTTEYWSQSYATTTTVTGPPGGTDTVIIREPPNPTVTTTEYWSQSYATTTTVTAPPGGTATVIIREPPNYTVTTTEYWSQSYATTTTVTGPPGGTDTVIIREPPSPTVTTTEYWSQSYATTTTVTAPPGGTATVIIREPPNPTVTTTEYWSQSYATTTTVTGPPGGTDTVIIREPPSPTVTTTEYWSQSYATTTTVTAPPGGTATVIIREPPNYTVTTTEYWSQSYATTTTVTGPPGGTDTVIIREPPNPTVTTTEYWSQSFATTTTVTAPPGGTDSVIIREPPNPTVTTTEYWSQSYATTTTVTAPPGGTDSVIIREPPNPTVTTTEYWSQSFATTTTVTAPPGGTDSVIIREPPNPTVTTTEYWSQSYATTTTVTAPPGGTDSVIIREPPNPTVTTTEYWSQSYATTTTVTAPPGGTATVIIREPPNYTVTTTEYWSQSYATTTTVTAPPGGTATVIIREPPNYTVTTTEYWSQSYATTTTITAPPGDTDTVIIREPPNYTVTTTEYWSQSFATTTTVTAPPGGTDSVIIREPPNPTVTTTEYWSQSYATTTTVTAPPGGTATVIIREPPNYTVTTTEYWSQSYATTTTVTAPPGGTATVIIREPPNYTVTTTEYWSQSYATTTTITAPPGDTDTVIIREPPNYTVTTTEYWSQSYATTTTVTAPPGGTDTVIIREPPNYTVTTTEYWSQSYATTTTVTAPPGGTATVIIREPPNYTVTTTEYWSQSYATTTTVTGPPGSTDTVIIREPPNPTVTTTEYWSQSYATTTTVTAPPGGTATVIIREPPNYTVTTTEYWSQSYATTTTVTAPPGGTDTVIIREPPNYTVTTTEYWSQSYATTTTVTAPPGGTDTVIIREPPSPTVTTTEYWSQSYATTTTVTAPPGGTATVIIREPPNYTVTTTEYWSESYATTTTVTGPPGGTDVILIREPPNPTVTTTEYWSESYATTTTITAPPGATDSVRIREPPNYTVTTTEYWSQSYATTTTVTAPPGGTDSVIIREPPNPTVTTTEYWSQSYATTTTVTAPPGGTATVIIREPPNYTVTTTEYWSQSYATTTTVTAPPGGTDTVIIREPPSPTVTTTEYWSQSYATTTTVTAPPGGTATVIIREPPSPTVTTTEYWSQSYATTTTVTAPPGGTATVIIREPPNYTVTTTEYWSQSYATTTTVTGPPGGTDTVIIREPPNPTVTTTEYWSQSYATTLTITAPPGGTNSVIIRVHSSTNDESSESTFSTLSVPSFSGSISVVSTVSRPHYVNSTVTHLPSSSSKPVDIPSSDVVTSTNDNSLTSLTGSENGKTSVAISTTFCDDENGCQTSIPQGSVVRTTATTTATTTTIIGDNNGSGKSKSGELSSTGSVTTNTATPDVPSTKVPSNPGAPGTGVPPPLAPSTETQTTNNVPGSPNIPATGTTDIIRESTTVSHTVTGNGNTGVPMNPNPVLTTSTSLTGATNSATNPSHETSVNTGSGGSTNIVTPPSSATATVVIPGTDNGATTKGQDTAGGNSNGSTATTNIQGGNNEPGNQPGTNTTGEPVGTTDTQSVESISQPTTLSQQTTSSLISTPLASTFDGSGSIVQHSGWLYVLLTAISIFF.

Residues 1–17 (MLLQFLLLSLCVSVATA) form the signal peptide. 4 disulfide bridges follow: Cys-73–Cys-150, Cys-96–Cys-112, Cys-205–Cys-297, and Cys-227–Cys-256. Residues Asn-253 and Asn-315 are each glycosylated (N-linked (GlcNAc...) asparagine). 6 ALS repeats span residues 364–395 (TTITTSYVGVTTSYSTKTAPIGETATVIVDVP), 400–431 (TTVTSEWTGTITTTTTRTNPTDSIDTVVVQVP), 437–468 (VTTTEYWSQSYATTTTVTAPPGGTDSVIIREP), 473–504 (VTTTEYWSQSYATSSTVTAPPGGTDTVIIREP), 509–540 (VTTTEYWSQSYATTTTVTAPPGGTDSVIIREP), and 545–576 (VTTTEYWSQSFATTTTITAPPGETDTVLIREP). N-linked (GlcNAc...) asparagine glycosylation occurs at Asn-578. The ALS 7 repeat unit spans residues 581–612 (VTTTEYWSQSYVTTSTITAPPGGTDTVIIREP). A glycan (N-linked (GlcNAc...) asparagine) is linked at Asn-614. ALS repeat units lie at residues 617 to 648 (VTTTEYWSQSYATTTTVTAPPGGTDTVIIREP), 653 to 684 (VTTTEYWSQSYATTTTVTGPPGGTDTVIIREP), 689 to 720 (VTTTEYWSQSYATTTTVTAPPGGTDTVIIREP), 725 to 756 (VTTTEYWSQSYATTTTVTGPPGGTDTVIIREP), 761 to 792 (VTTTEYWSQSYATTTTVTAPPGGTATVIIREP), 797 to 828 (VTTTEYWSQSYATTTTVTGPPGGTDTVIIREP), and 833 to 864 (VTTTEYWSQSYATTTTVTAPPGGTATVIIREP). An N-linked (GlcNAc...) asparagine glycan is attached at Asn-866. 4 ALS repeats span residues 869 to 900 (VTTTEYWSQSYATTTTVTGPPGGTDTVIIREP), 905 to 936 (VTTTEYWSQSYATTTTVTAPPGGTATVIIREP), 941 to 972 (VTTTEYWSQSYATTTTVTGPPGGTDTVIIREP), and 977 to 1008 (VTTTEYWSQSYATTTTVTAPPGGTATVIIREP). Positions 954–967 (TTTVTGPPGGTDTV) are enriched in low complexity. The segment at 954–975 (TTTVTGPPGGTDTVIIREPPNP) is disordered. A glycan (N-linked (GlcNAc...) asparagine) is linked at Asn-1010. 4 ALS repeats span residues 1013–1044 (VTTTEYWSQSYATTTTVTGPPGGTDTVIIREP), 1049–1077 (VTTTEYWSQSYATTTTVTAPPGGTATVII), 1085–1116 (VTTTEYWSQSYATTTTVTGPPGGTDTVIIREP), and 1121–1152 (VTTTEYWSQSYATTTTVTAPPGGTATVIIREP). The N-linked (GlcNAc...) asparagine glycan is linked to Asn-1154. ALS repeat units follow at residues 1157–1188 (VTTTEYWSQSYATTTTVTGPPGGTDTVIIREP), 1193–1224 (VTTTEYWSQSFATTTTVTAPPGGTDSVIIREP), 1229–1260 (VTTTEYWSQSYATTTTVTAPPGGTDSVIIREP), 1265–1296 (VTTTEYWSQSFATTTTVTAPPGGTDSVIIREP), 1301–1332 (VTTTEYWSQSYATTTTVTAPPGGTDSVIIREP), and 1337–1368 (VTTTEYWSQSYATTTTVTAPPGGTATVIIREP). A glycan (N-linked (GlcNAc...) asparagine) is linked at Asn-1370. Residues 1373-1404 (VTTTEYWSQSYATTTTVTAPPGGTATVIIREP) form an ALS 29 repeat. Asn-1406 carries an N-linked (GlcNAc...) asparagine glycan. An ALS 30 repeat occupies 1409–1440 (VTTTEYWSQSYATTTTITAPPGDTDTVIIREP). A glycan (N-linked (GlcNAc...) asparagine) is linked at Asn-1442. 2 ALS repeats span residues 1445–1476 (VTTTEYWSQSFATTTTVTAPPGGTDSVIIREP) and 1481–1512 (VTTTEYWSQSYATTTTVTAPPGGTATVIIREP). N-linked (GlcNAc...) asparagine glycosylation is present at Asn-1514. One copy of the ALS 33 repeat lies at 1517-1548 (VTTTEYWSQSYATTTTVTAPPGGTATVIIREP). Asn-1550 carries an N-linked (GlcNAc...) asparagine glycan. Residues 1553–1584 (VTTTEYWSQSYATTTTITAPPGDTDTVIIREP) form an ALS 34 repeat. Asn-1586 carries an N-linked (GlcNAc...) asparagine glycan. The stretch at 1589–1620 (VTTTEYWSQSYATTTTVTAPPGGTDTVIIREP) is one ALS 35 repeat. N-linked (GlcNAc...) asparagine glycosylation occurs at Asn-1622. An ALS 36 repeat occupies 1625 to 1656 (VTTTEYWSQSYATTTTVTAPPGGTATVIIREP). Asn-1658 carries N-linked (GlcNAc...) asparagine glycosylation. ALS repeat units follow at residues 1661-1692 (VTTTEYWSQSYATTTTVTGPPGSTDTVIIREP) and 1697-1728 (VTTTEYWSQSYATTTTVTAPPGGTATVIIREP). N-linked (GlcNAc...) asparagine glycosylation is present at Asn-1730. An ALS 39 repeat occupies 1733 to 1764 (VTTTEYWSQSYATTTTVTAPPGGTDTVIIREP). Asn-1766 carries an N-linked (GlcNAc...) asparagine glycan. 2 ALS repeats span residues 1769-1800 (VTTTEYWSQSYATTTTVTAPPGGTDTVIIREP) and 1805-1836 (VTTTEYWSQSYATTTTVTAPPGGTATVIIREP). A glycan (N-linked (GlcNAc...) asparagine) is linked at Asn-1838. 2 ALS repeats span residues 1841 to 1872 (VTTTEYWSESYATTTTVTGPPGGTDVILIREP) and 1877 to 1907 (VTTTEYWSESYATTTTITAPPGATDSVRIRE). An N-linked (GlcNAc...) asparagine glycan is attached at Asn-1910. ALS repeat units follow at residues 1913–1944 (VTTTEYWSQSYATTTTVTAPPGGTDSVIIREP) and 1949–1980 (VTTTEYWSQSYATTTTVTAPPGGTATVIIREP). Residue Asn-1982 is glycosylated (N-linked (GlcNAc...) asparagine). ALS repeat units follow at residues 1985 to 2016 (VTTTEYWSQSYATTTTVTAPPGGTDTVIIREP), 2021 to 2052 (VTTTEYWSQSYATTTTVTAPPGGTATVIIREP), and 2057 to 2088 (VTTTEYWSQSYATTTTVTAPPGGTATVIIREP). Asn-2090 carries an N-linked (GlcNAc...) asparagine glycan. ALS repeat units lie at residues 2093–2124 (VTTTEYWSQSYATTTTVTGPPGGTDTVIIREP) and 2129–2157 (VTTTEYWSQSYATTLTITAPPGGTNSVII). An N-linked (GlcNAc...) asparagine glycan is attached at Asn-2197. Disordered stretches follow at residues 2200 to 2235 (VTHLPSSSSKPVDIPSSDVVTSTNDNSLTSLTGSEN) and 2274 to 2494 (TTII…QQTT). Residues 2204–2233 (PSSSSKPVDIPSSDVVTSTNDNSLTSLTGS) are compositionally biased toward low complexity. Asn-2281 carries an N-linked (GlcNAc...) asparagine glycan. Low complexity predominate over residues 2282–2296 (GSGKSKSGELSSTGS). Composition is skewed to polar residues over residues 2329–2420 (STET…SATA) and 2429–2452 (NGATTKGQDTAGGNSNGSTATTNI). 2 N-linked (GlcNAc...) asparagine glycosylation sites follow: Asn-2444 and Asn-2466. 2 stretches are compositionally biased toward low complexity: residues 2453 to 2471 (QGGNNEPGNQPGTNTTGEP) and 2482 to 2494 (SISQPTTLSQQTT). A lipid anchor (GPI-anchor amidated aspartate) is attached at Asp-2507. A propeptide spans 2508 to 2530 (GSGSIVQHSGWLYVLLTAISIFF) (removed in mature form).

It belongs to the ALS family. Post-translationally, N-glycosylated and O-glycosylated. The GPI-anchor is attached to the protein in the endoplasmic reticulum and serves to target the protein to the cell surface. There, the glucosamine-inositol phospholipid moiety is cleaved off and the GPI-modified mannoprotein is covalently attached via its lipidless GPI glycan remnant to the 1,6-beta-glucan of the outer cell wall layer.

It is found in the cell membrane. The protein resides in the secreted. It localises to the cell wall. Its function is as follows. Cell surface adhesion protein which mediates both yeast-to-host tissue adherence and yeast aggregation. Plays an important role in the pathogenesis of C.albicans infections. In Candida albicans (strain SC5314 / ATCC MYA-2876) (Yeast), this protein is Agglutinin-like protein 2 (ALS2).